The sequence spans 292 residues: MSMPATSTKTTKLATSLIDEYALLGWRAMLTEVNLSPKPGLVDRINCGAHKDMALEDFHRSALAIQGWLPRFIEFGACSAEMAPEAVLHGLRPIGMACEGDMFRATAGVNTHKGSIFSLGLLCAAIGRLLQLNQPVTPTTVCSTAASFCRGLTDRELRTNNSQLTAGQRLYQQLGLTGARGEAEAGYPLVLNHALPHYLTLLDQGLDPELALLDTLLLLMAINGDTNVASRGGEGGLRWLQREAQTLLQKGGIRTPADLDYLRQFDRECIERNLSPGGSADLLILTWFLAQI.

It belongs to the CitG/MdcB family.

It catalyses the reaction 3'-dephospho-CoA + ATP = 2'-(5''-triphospho-alpha-D-ribosyl)-3'-dephospho-CoA + adenine. In terms of biological role, catalyzes the formation of 2-(5''-triphosphoribosyl)-3'-dephosphocoenzyme-A, the precursor of the prosthetic group of the holo-acyl carrier protein (gamma chain) of citrate lyase, from ATP and dephospho-CoA. The sequence is that of 2-(5''-triphosphoribosyl)-3'-dephosphocoenzyme-A synthase from Escherichia coli O139:H28 (strain E24377A / ETEC).